Reading from the N-terminus, the 380-residue chain is MRGLRQGIMKQLPILEPGDKPRKATWYTLTCPGDRPCPRVGHSCSYFPPVGDAESGKIFIVGGANPNQSFSDVHTMDLGTHQWDTATREGLLPRYEHASFLPSCSPHSIWVFGGADQSGNRNCLQVMSPEDRTWSTPEVTGSPPSPRTFHTSSAAIGNQLYVFGGGERGAQPVEDVKLHVFDANTLTWSQPETHGSPPSPRHGHVMVAAGTKLFIHGGLAGDKFFDDLHCIDIGDMSWQKLGPTGAVPVGCAAHAAVAVGHHVYMFGGMTATGALNMMYKYHTEKQHWTVLQFDTSLPAGRLDHSMCVIPWPVMSTSENKDSDSVILTLQDEKGDAAEKAETQSGGPHEESPTTVLLCFVFGGMNTEGEVYDDCLVTVVD.

6 Kelch repeats span residues 57-103 (KIFI…FLPS), 108-154 (SIWV…TSSA), 159-211 (QLYV…AAGT), 212-258 (KLFI…AAVA), 262-311 (HVYM…VIPW), and 357-380 (LCFVFGGMNTEGEVYDDCLVTVVD).

In terms of assembly, interacts with PIKFYVE; the interaction recruits RABEPK to the endosomal membrane. Interacts with RAB9 in its GTP-bound conformation. In terms of processing, phosphorylated on Ser residues by PIKFYVE.

It is found in the cytoplasm. The protein localises to the endosome membrane. Functionally, rab9 effector required for endosome to trans-Golgi network (TGN) transport. The chain is Rab9 effector protein with kelch motifs from Mus musculus (Mouse).